The following is a 365-amino-acid chain: DNA replication and repair protein RecF (365 aa).

30 to 37 (GLNGSGKT) provides a ligand contact to ATP.

It belongs to the RecF family.

The protein localises to the cytoplasm. Its function is as follows. The RecF protein is involved in DNA metabolism; it is required for DNA replication and normal SOS inducibility. RecF binds preferentially to single-stranded, linear DNA. It also seems to bind ATP. The polypeptide is DNA replication and repair protein RecF (Cellvibrio japonicus (strain Ueda107) (Pseudomonas fluorescens subsp. cellulosa)).